The following is an 864-amino-acid chain: Protein translocase subunit SecA (864 aa).

ATP contacts are provided by residues Gln87, 105–109, and Asp494; that span reads GEGKT. The segment at 809–864 is disordered; it reads AKATELRHKEQPAELSYSGGDEDGAKTPSRRNAPKVGRNDPCPCGSGKKYKKCCGA. Basic and acidic residues predominate over residues 810 to 820; the sequence is KATELRHKEQP. 4 residues coordinate Zn(2+): Cys850, Cys852, Cys861, and Cys862.

The protein belongs to the SecA family. As to quaternary structure, monomer and homodimer. Part of the essential Sec protein translocation apparatus which comprises SecA, SecYEG and auxiliary proteins SecDF-YajC and YidC. It depends on Zn(2+) as a cofactor.

The protein localises to the cell inner membrane. It localises to the cytoplasm. It carries out the reaction ATP + H2O + cellular proteinSide 1 = ADP + phosphate + cellular proteinSide 2.. In terms of biological role, part of the Sec protein translocase complex. Interacts with the SecYEG preprotein conducting channel. Has a central role in coupling the hydrolysis of ATP to the transfer of proteins into and across the cell membrane, serving as an ATP-driven molecular motor driving the stepwise translocation of polypeptide chains across the membrane. The sequence is that of Protein translocase subunit SecA from Oleidesulfovibrio alaskensis (strain ATCC BAA-1058 / DSM 17464 / G20) (Desulfovibrio alaskensis).